The primary structure comprises 1940 residues: Cilia- and flagella-associated protein 74 (1940 aa).

The disordered stretch occupies residues 52-90 (GSPAVTLRRAKAAAAANGTSSPGIRGSPSPARGPGGRLP). Positions 63–90 (AAAAANGTSSPGIRGSPSPARGPGGRLP) are enriched in low complexity. Residues 100-159 (ANVEQLKRRLQTVVAEVEGHQQRYDKVLLEANKATDLVHSMEAEIESLYVEAEELARRVP) adopt a coiled-coil conformation. Disordered stretches follow at residues 512–548 (VAGL…QSLT), 1159–1336 (SPHV…AAAE), 1373–1418 (PQSQ…AAPP), 1714–1737 (AGDK…GASK), and 1894–1940 (PGSR…KKAV). The span at 535–548 (SLTQQLAATQQSLT) shows a compositional bias: low complexity. Residues 1205-1220 (DGGGGGAMANGNGSGG) show a composition bias toward gly residues. A compositionally biased stretch (acidic residues) spans 1227-1236 (DGEPEDGEGD). Residues 1260 to 1271 (GRGGRGGRGGAA) are compositionally biased toward gly residues. Positions 1272–1282 (GEDEDEDEDAG) are enriched in acidic residues. Low complexity predominate over residues 1287-1304 (RGKSSSSSKASSGRRSSS). The segment covering 1321 to 1335 (VPDDDDADAEAEAAA) has biased composition (acidic residues). The span at 1373–1414 (PQSQNPTPSQSQSGQAPAASAPSDGASGAAAAAETAASSGPA) shows a compositional bias: low complexity. 2 stretches are compositionally biased toward pro residues: residues 1720 to 1731 (TPAPGIKPPATP) and 1896 to 1912 (SRPP…PAPE). A compositionally biased stretch (low complexity) spans 1913-1929 (PVAASGPGAGAAGVKKL). Residues 1930–1940 (VPPPSPPKKAV) are compositionally biased toward pro residues.

The protein belongs to the CFAP74 family. Part of the PDCP1 complex composed of CFAP46, CFAP54, CFAP74 and CFAP221; the PDCP1 complex binds calmodulin.

The protein localises to the cytoplasm. The protein resides in the cytoskeleton. Its subcellular location is the cilium axoneme. Functionally, as part of the central apparatus of the cilium axoneme may play a role in cilium movement and thereby cell motility. This chain is Cilia- and flagella-associated protein 74, found in Chlamydomonas reinhardtii (Chlamydomonas smithii).